Here is a 29-residue protein sequence, read N- to C-terminus: Trypsin inhibitor 2 (29 aa).

Intrachain disulfides connect Cys3-Cys20, Cys10-Cys22, and Cys16-Cys28.

Belongs to the protease inhibitor I7 (squash-type serine protease inhibitor) family.

It localises to the secreted. Its function is as follows. Inhibits trypsin. The protein is Trypsin inhibitor 2 of Bryonia dioica (Red bryony).